The chain runs to 388 residues: Beta-1,4-galactosyltransferase 5 (388 aa).

At 1-14 (MRVRRGLLRLPRRS) the chain is on the cytoplasmic side. Residues 15 to 35 (LLAALFFFSLSSSLLYFVYVA) traverse the membrane as a helical; Signal-anchor for type II membrane protein segment. The Lumenal portion of the chain corresponds to 36 to 388 (PGIVNTYLFM…TPELAQVTEY (353 aa)). 5 N-linked (GlcNAc...) asparagine glycosylation sites follow: Asn77, Asn81, Asn90, Asn111, and Asn128. Cys114 and Cys158 are oxidised to a cystine. Residues 169–173 (PFRNR), 208–210 (FNR), 235–236 (VD), Tyr264, and Trp296 contribute to the UDP-alpha-D-galactose site. The cysteines at positions 229 and 248 are disulfide-linked. Position 236 (Asp236) interacts with Mn(2+). N-acetyl-D-glucosamine is bound at residue 298–301 (GEDD). UDP-alpha-D-galactose is bound at residue 329 to 330 (YH). Arg340 is a binding site for N-acetyl-D-glucosamine. Asn364 and Asn373 each carry an N-linked (GlcNAc...) asparagine glycan.

This sequence belongs to the glycosyltransferase 7 family. As to quaternary structure, (Microbial infection) Interacts with porcine reproductive and respiratory syndrome virus GP5. Mn(2+) is required as a cofactor.

It is found in the golgi apparatus. Its subcellular location is the golgi stack membrane. The enzyme catalyses a beta-D-glucosyl-(1&lt;-&gt;1')-N-acylsphing-4-enine + UDP-alpha-D-galactose = a beta-D-Gal-(1-&gt;4)-beta-D-Glc-(1&lt;-&gt;1)-Cer(d18:1(4E)) + UDP + H(+). It functions in the pathway protein modification; protein glycosylation. The protein operates within sphingolipid metabolism. Catalyzes the synthesis of lactosylceramide (LacCer) via the transfer of galactose from UDP-galactose to glucosylceramide (GlcCer). LacCer is the starting point in the biosynthesis of all gangliosides (membrane-bound glycosphingolipids) which play pivotal roles in the CNS including neuronal maturation and axonal and myelin formation. Plays a role in the glycosylation of BMPR1A and regulation of its protein stability. Essential for extraembryonic development during early embryogenesis. In terms of biological role, (Microbial infection) May play a role in the glycosylation of porcine reproductive and respiratory syndrome virus GP5 protein and may be involved in the regulation of viral proliferation. In Sus scrofa (Pig), this protein is Beta-1,4-galactosyltransferase 5 (B4GALT5).